Reading from the N-terminus, the 356-residue chain is S-adenosylmethionine:tRNA ribosyltransferase-isomerase (356 aa).

Belongs to the QueA family. Monomer.

The protein localises to the cytoplasm. It carries out the reaction 7-aminomethyl-7-carbaguanosine(34) in tRNA + S-adenosyl-L-methionine = epoxyqueuosine(34) in tRNA + adenine + L-methionine + 2 H(+). It functions in the pathway tRNA modification; tRNA-queuosine biosynthesis. Functionally, transfers and isomerizes the ribose moiety from AdoMet to the 7-aminomethyl group of 7-deazaguanine (preQ1-tRNA) to give epoxyqueuosine (oQ-tRNA). The sequence is that of S-adenosylmethionine:tRNA ribosyltransferase-isomerase from Shigella boydii serotype 4 (strain Sb227).